Consider the following 626-residue polypeptide: Chaperone protein HtpG (626 aa).

The a; substrate-binding stretch occupies residues 1–339; sequence MSTNQETRGF…SNDLPLNVSR (339 aa). A b region spans residues 340 to 555; it reads EILQDNKVTA…NDQMTTQMAK (216 aa). The interval 556–626 is c; the sequence is LFAAAGQPVP…FIKRINKLLG (71 aa).

Belongs to the heat shock protein 90 family. In terms of assembly, homodimer.

The protein localises to the cytoplasm. Its function is as follows. Molecular chaperone. Has ATPase activity. This is Chaperone protein HtpG from Aggregatibacter actinomycetemcomitans (Actinobacillus actinomycetemcomitans).